A 233-amino-acid chain; its full sequence is Enolase-phosphatase E1 (233 aa).

The Mg(2+) site is built by D6 and E8. Substrate-binding positions include S128–S129 and K163. A Mg(2+)-binding site is contributed by D188.

Belongs to the HAD-like hydrolase superfamily. MasA/MtnC family. Monomer. Mg(2+) serves as cofactor.

The protein localises to the cytoplasm. It is found in the nucleus. The enzyme catalyses 5-methylsulfanyl-2,3-dioxopentyl phosphate + H2O = 1,2-dihydroxy-5-(methylsulfanyl)pent-1-en-3-one + phosphate. It functions in the pathway amino-acid biosynthesis; L-methionine biosynthesis via salvage pathway; L-methionine from S-methyl-5-thio-alpha-D-ribose 1-phosphate: step 3/6. Its pathway is amino-acid biosynthesis; L-methionine biosynthesis via salvage pathway; L-methionine from S-methyl-5-thio-alpha-D-ribose 1-phosphate: step 4/6. Bifunctional enzyme that catalyzes the enolization of 2,3-diketo-5-methylthiopentyl-1-phosphate (DK-MTP-1-P) into the intermediate 2-hydroxy-3-keto-5-methylthiopentenyl-1-phosphate (HK-MTPenyl-1-P), which is then dephosphorylated to form the acireductone 1,2-dihydroxy-3-keto-5-methylthiopentene (DHK-MTPene). This is Enolase-phosphatase E1 from Yarrowia lipolytica (strain CLIB 122 / E 150) (Yeast).